The primary structure comprises 57 residues: COP9 signalosome complex subunit 9 (57 aa).

It belongs to the CSN9 family. In terms of assembly, component of the CSN complex, probably composed of cops1, cops2, cops3, cops4, cops5, cops6, cops7, cops8 and cops9.

The protein localises to the nucleus. It is found in the cytoplasm. It localises to the nucleoplasm. Component of the COP9 signalosome complex (CSN), a complex involved in various cellular and developmental processes. The CSN complex is an essential regulator of the ubiquitin (Ubl) conjugation pathway by mediating the deneddylation of the cullin subunits of SCF-type E3 ligase complexes, leading to decrease the Ubl ligase activity. May play a role in cell proliferation. The polypeptide is COP9 signalosome complex subunit 9 (Danio rerio (Zebrafish)).